The following is a 194-amino-acid chain: Large ribosomal subunit protein bL9 (194 aa).

Belongs to the bacterial ribosomal protein bL9 family.

Its function is as follows. Binds to the 23S rRNA. In Paracoccus denitrificans (strain Pd 1222), this protein is Large ribosomal subunit protein bL9.